A 114-amino-acid polypeptide reads, in one-letter code: Iron-sulfur cluster insertion protein ErpA (114 aa).

Iron-sulfur cluster contacts are provided by Cys-42, Cys-106, and Cys-108.

Belongs to the HesB/IscA family. As to quaternary structure, homodimer. Iron-sulfur cluster serves as cofactor.

Required for insertion of 4Fe-4S clusters for at least IspG. This Buchnera aphidicola subsp. Acyrthosiphon pisum (strain APS) (Acyrthosiphon pisum symbiotic bacterium) protein is Iron-sulfur cluster insertion protein ErpA.